Consider the following 524-residue polypeptide: Nucleoporin NUP56 (524 aa).

The interval 1-219 (MADDPHNTST…SSMAKFASST (219 aa)) is disordered. 3 stretches are compositionally biased toward basic and acidic residues: residues 28-80 (VKED…EPEK), 114-168 (THDE…KEVE), and 179-199 (SAEK…KVDK). Positions 37–44 (ARRELKQT) match the Nuclear localization signal motif. The stretch at 111 to 133 (KKRTHDELEQDGKEEEEKKEGEK) forms a coiled coil. The segment covering 200 to 219 (PQTSSSAFANSSMAKFASST) has biased composition (polar residues). FG repeat units lie at residues 223–224 (FG), 226–227 (FG), 237–238 (FG), 247–248 (FG), 266–267 (FG), 312–313 (FG), and 328–329 (FG). 2 disordered regions span residues 247–284 (FGSK…QAGG) and 300–371 (GSSA…GEEK). The segment covering 248–277 (GSKSADASAAPAGPPKLSFGSASAASPFAS) has biased composition (low complexity). Composition is skewed to acidic residues over residues 332 to 345 (ESDE…EEGE) and 352 to 362 (GEGEEKEEEEK). Residues 345-376 (EENKSENGEGEEKEEEEKEEKASGEEKKKFKL) adopt a coiled-coil conformation. The RanBD1 domain maps to 377–475 (QKVHIDDGEG…TPILPAMKFQ (99 aa)). Positions 503–524 (SQANATQFSNMVEKIKEKLAAA) form a coiled coil.

As to quaternary structure, the nuclear pore complex (NPC) constitutes the exclusive means of nucleocytoplasmic transport. NPCs allow the passive diffusion of ions and small molecules and the active, nuclear transport receptor-mediated bidirectional transport of macromolecules such as proteins, RNAs, ribonucleoparticles (RNPs), and ribosomal subunits across the nuclear envelope. The 55-60 MDa NPC is composed of at least 28 different subunits: AMO1, ELYS, GLE1, GLE2, MLP1, NDC1, NIC96, NSP1, NUP133, NUP145, NUP152, NUP159, NUP170, NUP188, NUP192, NUP37, NUP49, NUP53, NUP56, NUP57, NUP82, NUP84, NUP85, POM152, POM33, POM34, SEC13 and SEH1. Due to its 8-fold rotational symmetry, all subunits are present with 8 copies or multiples thereof.

The protein resides in the nucleus. It is found in the nuclear pore complex. Its subcellular location is the nucleus membrane. In terms of biological role, functions as a component of the nuclear pore complex (NPC). NPC components, collectively referred to as nucleoporins (NUPs), can play the role of both NPC structural components and of docking or interaction partners for transiently associated nuclear transport factors. Active directional transport is assured by both, a Phe-Gly (FG) repeat affinity gradient for these transport factors across the NPC and a transport cofactor concentration gradient across the nuclear envelope (GSP1 and GSP2 GTPases associated predominantly with GTP in the nucleus, with GDP in the cytoplasm). This Chaetomium thermophilum (strain DSM 1495 / CBS 144.50 / IMI 039719) (Thermochaetoides thermophila) protein is Nucleoporin NUP56 (NUP56).